Here is a 310-residue protein sequence, read N- to C-terminus: ADP-L-glycero-D-manno-heptose-6-epimerase (310 aa).

NADP(+)-binding positions include 10–11 (FI), 31–32 (DN), Lys38, Lys53, 75–79 (EGACS), and Asn92. The active-site Proton acceptor is Tyr140. Lys144 contacts NADP(+). Asn169 provides a ligand contact to substrate. NADP(+)-binding residues include Val170 and Lys178. The active-site Proton acceptor is Lys178. Substrate is bound by residues Ser180, His187, 201–204 (FEGS), Arg209, and Tyr272.

Belongs to the NAD(P)-dependent epimerase/dehydratase family. HldD subfamily. In terms of assembly, homopentamer. The cofactor is NADP(+).

The enzyme catalyses ADP-D-glycero-beta-D-manno-heptose = ADP-L-glycero-beta-D-manno-heptose. The protein operates within nucleotide-sugar biosynthesis; ADP-L-glycero-beta-D-manno-heptose biosynthesis; ADP-L-glycero-beta-D-manno-heptose from D-glycero-beta-D-manno-heptose 7-phosphate: step 4/4. Its function is as follows. Catalyzes the interconversion between ADP-D-glycero-beta-D-manno-heptose and ADP-L-glycero-beta-D-manno-heptose via an epimerization at carbon 6 of the heptose. This Salmonella arizonae (strain ATCC BAA-731 / CDC346-86 / RSK2980) protein is ADP-L-glycero-D-manno-heptose-6-epimerase.